A 29-amino-acid polypeptide reads, in one-letter code: Dermaseptin-J6 (29 aa).

Val-29 carries the post-translational modification Valine amide.

Expressed by the skin glands.

It is found in the secreted. Has antimicrobial activity. This is Dermaseptin-J6 from Phasmahyla jandaia (Jandaia leaf frog).